Here is a 140-residue protein sequence, read N- to C-terminus: Large ribosomal subunit protein bL17 (140 aa).

Belongs to the bacterial ribosomal protein bL17 family. As to quaternary structure, part of the 50S ribosomal subunit. Contacts protein L32.

The chain is Large ribosomal subunit protein bL17 from Rhizobium leguminosarum bv. trifolii (strain WSM2304).